Reading from the N-terminus, the 312-residue chain is Ribosomal RNA small subunit methyltransferase H (312 aa).

S-adenosyl-L-methionine-binding positions include 37–39, D57, F83, and D104; that span reads GGH.

The protein belongs to the methyltransferase superfamily. RsmH family.

The protein localises to the cytoplasm. The catalysed reaction is cytidine(1402) in 16S rRNA + S-adenosyl-L-methionine = N(4)-methylcytidine(1402) in 16S rRNA + S-adenosyl-L-homocysteine + H(+). Specifically methylates the N4 position of cytidine in position 1402 (C1402) of 16S rRNA. The sequence is that of Ribosomal RNA small subunit methyltransferase H from Malacoplasma penetrans (strain HF-2) (Mycoplasma penetrans).